Consider the following 447-residue polypeptide: Argininosuccinate synthase (447 aa).

Residues 17–25 (AFSGGLDTS) and Ala-43 contribute to the ATP site. An L-citrulline-binding site is contributed by Tyr-99. Positions 129 and 131 each coordinate ATP. Residues Thr-131, Asn-135, and Asp-136 each contribute to the L-aspartate site. Asn-135 serves as a coordination point for L-citrulline. Asp-136 provides a ligand contact to ATP. L-citrulline-binding residues include Arg-139 and Ser-192. Residue Asp-194 participates in ATP binding. Positions 201, 203, and 280 each coordinate L-citrulline.

The protein belongs to the argininosuccinate synthase family. Type 2 subfamily. In terms of assembly, homotetramer.

Its subcellular location is the cytoplasm. It carries out the reaction L-citrulline + L-aspartate + ATP = 2-(N(omega)-L-arginino)succinate + AMP + diphosphate + H(+). Its pathway is amino-acid biosynthesis; L-arginine biosynthesis; L-arginine from L-ornithine and carbamoyl phosphate: step 2/3. The chain is Argininosuccinate synthase from Salmonella paratyphi B (strain ATCC BAA-1250 / SPB7).